We begin with the raw amino-acid sequence, 338 residues long: MKVFYDKDCDLSLIKGKTVAIIGYGSQGHAHAQNLNESGVKVVVGLRKGGASWDKVAKAGLTVAEVDDAVKSADLVMILLPDENIPEVYNNNVAPNIKQGATLAFAHGFNIHYNQVVPRADLDVIMVAPKGPGHTVRSEYLKGGGVPSLIAVYQDKSGKARDLALSYAMANGGGKGGIIETNFKEETETDLFGEQAVLCGGAVELVKMGFETLTEAGYAPEMAYFECLHELKLIVDLMYEGGIANMNYSISNNAEYGEYVTGTEVINDKSREAMRAALKRIQTGEYAKMFIQEGRTNYPSMTARRRMNADHAIEKVGGQLRAMMPWISKNKLVDQSRN.

Positions 1-181 (MKVFYDKDCD…GGGKGGIIET (181 aa)) constitute a KARI N-terminal Rossmann domain. NADP(+) is bound by residues 24 to 27 (YGSQ), arginine 47, and serine 52. Residue histidine 107 is part of the active site. Position 133 (glycine 133) interacts with NADP(+). Residues 182–327 (NFKEETETDL…GQLRAMMPWI (146 aa)) enclose the KARI C-terminal knotted domain. Mg(2+)-binding residues include aspartate 190, glutamate 194, glutamate 226, and glutamate 230. A substrate-binding site is contributed by serine 251.

The protein belongs to the ketol-acid reductoisomerase family. Requires Mg(2+) as cofactor.

The enzyme catalyses (2R)-2,3-dihydroxy-3-methylbutanoate + NADP(+) = (2S)-2-acetolactate + NADPH + H(+). The catalysed reaction is (2R,3R)-2,3-dihydroxy-3-methylpentanoate + NADP(+) = (S)-2-ethyl-2-hydroxy-3-oxobutanoate + NADPH + H(+). Its pathway is amino-acid biosynthesis; L-isoleucine biosynthesis; L-isoleucine from 2-oxobutanoate: step 2/4. The protein operates within amino-acid biosynthesis; L-valine biosynthesis; L-valine from pyruvate: step 2/4. Involved in the biosynthesis of branched-chain amino acids (BCAA). Catalyzes an alkyl-migration followed by a ketol-acid reduction of (S)-2-acetolactate (S2AL) to yield (R)-2,3-dihydroxy-isovalerate. In the isomerase reaction, S2AL is rearranged via a Mg-dependent methyl migration to produce 3-hydroxy-3-methyl-2-ketobutyrate (HMKB). In the reductase reaction, this 2-ketoacid undergoes a metal-dependent reduction by NADPH to yield (R)-2,3-dihydroxy-isovalerate. The protein is Ketol-acid reductoisomerase (NADP(+)) of Delftia acidovorans (strain DSM 14801 / SPH-1).